The primary structure comprises 309 residues: Ornithine carbamoyltransferase (309 aa).

Carbamoyl phosphate-binding positions include 57-60, Gln84, Arg108, and 135-138; these read STRT and HPCQ. Residues Asn166, Asp226, and 230–231 contribute to the L-ornithine site; that span reads SM. Carbamoyl phosphate is bound by residues 265-266 and Arg293; that span reads CL.

It belongs to the aspartate/ornithine carbamoyltransferase superfamily. OTCase family.

Its subcellular location is the cytoplasm. The enzyme catalyses carbamoyl phosphate + L-ornithine = L-citrulline + phosphate + H(+). It functions in the pathway amino-acid biosynthesis; L-arginine biosynthesis; L-arginine from L-ornithine and carbamoyl phosphate: step 1/3. Its function is as follows. Reversibly catalyzes the transfer of the carbamoyl group from carbamoyl phosphate (CP) to the N(epsilon) atom of ornithine (ORN) to produce L-citrulline. This is Ornithine carbamoyltransferase from Rhizorhabdus wittichii (strain DSM 6014 / CCUG 31198 / JCM 15750 / NBRC 105917 / EY 4224 / RW1) (Sphingomonas wittichii).